The sequence spans 862 residues: Linoleate 9S-lipoxygenase 1 (862 aa).

Residues 44-171 (FGAATDIVGG…SYKRDRIFFA (128 aa)) enclose the PLAT domain. Residues 174 to 862 (TYLPNETPAS…FRGIPNSISI (689 aa)) form the Lipoxygenase domain. The segment at 225-257 (KNLARTTLGGSSDFPYPRRGRTGRKSTRKDPKC) is disordered. Positions 242–251 (RRGRTGRKST) are enriched in basic residues. Fe cation-binding residues include H522, H527, H713, N717, and I862.

This sequence belongs to the lipoxygenase family. In terms of assembly, monomer. Fe cation is required as a cofactor.

It is found in the cytoplasm. It catalyses the reaction (9Z,12Z)-octadecadienoate + O2 = (13S)-hydroperoxy-(9Z,11E)-octadecadienoate. The enzyme catalyses (9Z,12Z,15Z)-octadecatrienoate + O2 = (13S)-hydroperoxy-(9Z,11E,15Z)-octadecatrienoate. The catalysed reaction is (9Z,12Z)-octadecadienoate + O2 = (9S)-hydroperoxy-(10E,12Z)-octadecadienoate. It participates in lipid metabolism; oxylipin biosynthesis. Functionally, plant lipoxygenase may be involved in a number of diverse aspects of plant physiology including growth and development, pest resistance, and senescence or responses to wounding. It catalyzes the hydroperoxidation of lipids containing a cis,cis-1,4-pentadiene structure. The sequence is that of Linoleate 9S-lipoxygenase 1 (LOXA) from Phaseolus vulgaris (Kidney bean).